Here is a 216-residue protein sequence, read N- to C-terminus: Uracil phosphoribosyltransferase (216 aa).

5-phospho-alpha-D-ribose 1-diphosphate contacts are provided by residues Arg85, Arg110, and 135–143 (DPMVATGYS). Uracil-binding positions include Ile200 and 205–207 (GDA). Asp206 lines the 5-phospho-alpha-D-ribose 1-diphosphate pocket.

Belongs to the UPRTase family. Requires Mg(2+) as cofactor.

It catalyses the reaction UMP + diphosphate = 5-phospho-alpha-D-ribose 1-diphosphate + uracil. Its pathway is pyrimidine metabolism; UMP biosynthesis via salvage pathway; UMP from uracil: step 1/1. Allosterically activated by GTP. Functionally, catalyzes the conversion of uracil and 5-phospho-alpha-D-ribose 1-diphosphate (PRPP) to UMP and diphosphate. This is Uracil phosphoribosyltransferase from Burkholderia vietnamiensis (strain G4 / LMG 22486) (Burkholderia cepacia (strain R1808)).